The chain runs to 211 residues: Fin bud initiation factor homolog (211 aa).

Residues 1 to 18 form the signal peptide; the sequence is MVFLKFFCMSFFCHLCQG. Asn-30 carries N-linked (GlcNAc...) asparagine glycosylation.

This sequence belongs to the FIBIN family. As to quaternary structure, homodimer; disulfide-linked. Seems to also exist as monomers.

It is found in the secreted. Its subcellular location is the golgi apparatus. The protein resides in the endoplasmic reticulum. In Homo sapiens (Human), this protein is Fin bud initiation factor homolog (FIBIN).